We begin with the raw amino-acid sequence, 654 residues long: Endoplasmic reticulum chaperone BiP (654 aa).

An N-terminal signal peptide occupies residues 1 to 18; that stretch reads MKLSLVAAMLLLLSAARA. A required for interaction with ELAPOR1 region spans residues 1–80; it reads MKLSLVAAML…EGERLIGDAA (80 aa). 36-39 contacts ATP; that stretch reads GTTY. The residue at position 86 (serine 86) is a Phosphoserine. Lysine 96 is a binding site for ATP. At lysine 125 the chain carries N6-acetyllysine. Residues 125-280 form a nucleotide-binding (NBD) region; the sequence is KPYIQVDIGG…KKKTGKDVRK (156 aa). 3'-nitrotyrosine is present on tyrosine 160. At lysine 213 the chain carries N6-acetyllysine. 227-229 is a binding site for ATP; the sequence is GGT. Lysine 271 carries the N6-acetyllysine modification. Residue 293 to 300 coordinates ATP; the sequence is EKAKRALS. Residue lysine 326 is modified to N6-acetyllysine. A Glycyl lysine isopeptide (Lys-Gly) (interchain with G-Cter in SUMO2) cross-link involves residue lysine 352. Lysine 353 bears the N6-acetyllysine; alternate mark. A Glycyl lysine isopeptide (Lys-Gly) (interchain with G-Cter in SUMO1); alternate cross-link involves residue lysine 353. Residue 364 to 367 participates in ATP binding; it reads GSTR. The segment at 409 to 419 is interdomain linker; the sequence is QDTGDLALLDV. The segment at 420–500 is substrate-binding (SBD); the sequence is CPLTLGIETV…PRGVPQIEVT (81 aa). The residue at position 447 (lysine 447) is an N6-succinyllysine. Omega-N-methylarginine is present on arginine 492. Residue threonine 518 is modified to O-AMP-threonine; alternate. Threonine 518 carries the phosphothreonine; alternate modification. Lysine 585 is subject to N6,N6,N6-trimethyllysine; by METTL21A; in vitro. Lysine 585 carries the N6,N6-dimethyllysine; alternate modification. Lysine 585 is modified (N6-methyllysine; alternate). Lysine 591 carries the N6-methyllysine modification. A disordered region spans residues 633–654; the sequence is KLYGSAGPPPTGEEDTAEKDEL. Threonine 643 and threonine 648 each carry phosphothreonine. Acidic residues predominate over residues 644-654; sequence GEEDTAEKDEL. The Prevents secretion from ER motif lies at 651–654; that stretch reads KDEL.

The protein belongs to the heat shock protein 70 family. In terms of assembly, monomer and homooligomer; homooligomerization via the interdomain linker inactivates the chaperone activity and acts as a storage of HSPA5/BiP molecules. Interacts with DNAJC1 (via J domain). Component of an EIF2 complex at least composed of CELF1/CUGBP1, CALR, CALR3, EIF2S1, EIF2S2, HSP90B1 and HSPA5. Part of a large chaperone multiprotein complex comprising DNAJB11, HSP90B1, HSPA5, HYOU, PDIA2, PDIA4, PDIA6, PPIB, SDF2L1, UGGT1 and very small amounts of ERP29, but not, or at very low levels, CALR nor CANX. Interacts with TMEM132A and TRIM21. May form a complex with ERLEC1, OS9, SEL1L and SYVN1. Interacts with DNAJC10. Interacts with DNAJB9/ERdj4; leading to recruit HSPA5/BiP to ERN1/IRE1. Interacts with ERN1/IRE1 (via luminal domain); the interaction takes place following interaction with DNAJB9/ERdj4 and leads to inactivate ERN1/IRE1, the interaction also competitively inhibits ERN1 interaction with MANF. Interacts directly with MANF (via SAP domain); the interaction inhibits ATP binding to HSPA5/BiP and subsequent nucleotide exchange. Interacts with EIF2AK3/PERK (via luminal domain); interaction leads to inactivate EIF2AK3/PERK. Interacts with MX1. Interacts with METTL23. Interacts with CEMIP; the interaction induces calcium leakage from the endoplasmic reticulum and cell migration. Interacts with PCSK4 form; the interaction takes place in the endoplasmic reticulum. Interacts with CIPC. Interacts with CCDC88B (via C-terminus); the interaction opposes ERN1-mediated JNK activation, protecting against apoptosis. Interacts with INPP5K; necessary for INPP5K localization at the endoplasmic reticulum. Interacts with MANF; the interaction is direct. Interacts with LOXL2; leading to activate the ERN1/IRE1-XBP1 pathway of the unfolded protein response. Interacts with CLU under stressed condition; interaction increases CLU protein stability; facilitates its retrotranslocation and redistribution to the mitochondria; cooperatively suppress stress-induced apoptosis by stabilizing mitochondrial membrane integrity. Interacts with CCDC47. Interacts with CLN3. Interacts with ELAPOR1; may regulate the function of HSPA5 in apoptosis and cell proliferation. Interacts with CASP7. Interacts with ILDR2; the interaction stabilizes ILDR2 expression. Interacts with ADAM7. In unstressed cells, AMPylation at Thr-518 by FICD inactivates the chaperome activity: AMPylated form is locked in a relatively inert state and only weakly stimulated by J domain-containing proteins. In response to endoplasmic reticulum stress, de-AMPylation by the same protein, FICD, restores the chaperone activity.

The protein localises to the endoplasmic reticulum lumen. It is found in the melanosome. It localises to the cytoplasm. Its subcellular location is the cell surface. The catalysed reaction is ATP + H2O = ADP + phosphate + H(+). The chaperone activity is regulated by ATP-induced allosteric coupling of the nucleotide-binding (NBD) and substrate-binding (SBD) domains. In the ADP-bound and nucleotide-free (apo) states, the two domains have little interaction. In contrast, in the ATP-bound state the two domains are tightly coupled, which results in drastically accelerated kinetics in both binding and release of polypeptide substrates. J domain-containing co-chaperones (DNAJB9/ERdj4 or DNAJC10/ERdj5) stimulate the ATPase activity and are required for efficient substrate recognition by HSPA5/BiP. Homooligomerization inactivates participating HSPA5/BiP protomers and probably act as reservoirs to store HSPA5/BiP molecules when they are not needed by the cell. Functionally, endoplasmic reticulum chaperone that plays a key role in protein folding and quality control in the endoplasmic reticulum lumen. Involved in the correct folding of proteins and degradation of misfolded proteins via its interaction with DNAJC10/ERdj5, probably to facilitate the release of DNAJC10/ERdj5 from its substrate. Acts as a key repressor of the EIF2AK3/PERK and ERN1/IRE1-mediated unfolded protein response (UPR). In the unstressed endoplasmic reticulum, recruited by DNAJB9/ERdj4 to the luminal region of ERN1/IRE1, leading to disrupt the dimerization of ERN1/IRE1, thereby inactivating ERN1/IRE1. Also binds and inactivates EIF2AK3/PERK in unstressed cells. Accumulation of misfolded protein in the endoplasmic reticulum causes release of HSPA5/BiP from ERN1/IRE1 and EIF2AK3/PERK, allowing their homodimerization and subsequent activation. Plays an auxiliary role in post-translational transport of small presecretory proteins across endoplasmic reticulum (ER). May function as an allosteric modulator for SEC61 channel-forming translocon complex, likely cooperating with SEC62 to enable the productive insertion of these precursors into SEC61 channel. Appears to specifically regulate translocation of precursors having inhibitory residues in their mature region that weaken channel gating. May also play a role in apoptosis and cell proliferation. The protein is Endoplasmic reticulum chaperone BiP of Pongo abelii (Sumatran orangutan).